We begin with the raw amino-acid sequence, 101 residues long: MSRKSVIQRNLKRISICNRLKNKREELKAIIKDQSISMNDRFLAQVKLSKLPRDSSYIRIRNRCLITGRPRGCYRKFKVSRIVLRQLGSIGQIPGLTKSSW.

This sequence belongs to the universal ribosomal protein uS14 family. As to quaternary structure, part of the 30S ribosomal subunit. Contacts proteins S3 and S10.

Its function is as follows. Binds 16S rRNA, required for the assembly of 30S particles and may also be responsible for determining the conformation of the 16S rRNA at the A site. The sequence is that of Small ribosomal subunit protein uS14 from Ehrlichia chaffeensis (strain ATCC CRL-10679 / Arkansas).